The following is a 92-amino-acid chain: uncharacterized protein (92 aa).

Residues 1-29 form the signal peptide; sequence MAAQTDYKKQVVGILLSLAFVLFVFSFSE.

This is an uncharacterized protein from Bacillus subtilis (strain 168).